Here is a 565-residue protein sequence, read N- to C-terminus: Membrane protein insertase YidC (565 aa).

The next 6 helical transmembrane spans lie at 6-26, 348-368, 370-390, 437-457, 479-499, and 516-536; these read VLLIFSWLTVATLLWMDWGKN, LMALIGQGLFWILSHLNSLLH, WGWAIVGLVVLLRIAMYPLSA, GGCFPILIQMPIFFALYWVLV, PYFILPLLNIVIMWATQKLTP, and PLIFGVMMAFVPSGLALYWVI.

The protein belongs to the OXA1/ALB3/YidC family. Type 1 subfamily. Interacts with the Sec translocase complex via SecD. Specifically interacts with transmembrane segments of nascent integral membrane proteins during membrane integration.

The protein localises to the cell inner membrane. Its function is as follows. Required for the insertion and/or proper folding and/or complex formation of integral membrane proteins into the membrane. Involved in integration of membrane proteins that insert both dependently and independently of the Sec translocase complex, as well as at least some lipoproteins. Aids folding of multispanning membrane proteins. The polypeptide is Membrane protein insertase YidC (Xylella fastidiosa (strain M12)).